The sequence spans 559 residues: Potassium-transporting ATPase potassium-binding subunit (559 aa).

The next 13 helical transmembrane spans lie at 5 to 25 (GFLL…PLGS), 27 to 47 (LARL…RILW), 63 to 83 (LLAL…LLFW), 132 to 152 (GLTV…FALI), 170 to 190 (LVRI…LFFI), 253 to 273 (LAQM…FGEA), 283 to 303 (LLWA…WAEV), 327 to 347 (FGVL…CGAV), 356 to 376 (ALGG…FGGV), 379 to 399 (GLYG…LMIG), 416 to 436 (MTAL…ALAM), 484 to 504 (LLAF…MAIA), and 524 to 544 (GALF…LTFI).

It belongs to the KdpA family. In terms of assembly, the system is composed of three essential subunits: KdpA, KdpB and KdpC.

It localises to the cell inner membrane. In terms of biological role, part of the high-affinity ATP-driven potassium transport (or Kdp) system, which catalyzes the hydrolysis of ATP coupled with the electrogenic transport of potassium into the cytoplasm. This subunit binds the periplasmic potassium ions and delivers the ions to the membrane domain of KdpB through an intramembrane tunnel. In Salmonella typhimurium (strain LT2 / SGSC1412 / ATCC 700720), this protein is Potassium-transporting ATPase potassium-binding subunit.